The sequence spans 301 residues: Probable 5-dehydro-4-deoxyglucarate dehydratase (301 aa).

It belongs to the DapA family.

It catalyses the reaction 5-dehydro-4-deoxy-D-glucarate + H(+) = 2,5-dioxopentanoate + CO2 + H2O. It participates in carbohydrate acid metabolism; D-glucarate degradation; 2,5-dioxopentanoate from D-glucarate: step 2/2. This chain is Probable 5-dehydro-4-deoxyglucarate dehydratase, found in Cereibacter sphaeroides (strain ATCC 17029 / ATH 2.4.9) (Rhodobacter sphaeroides).